Reading from the N-terminus, the 316-residue chain is Homoserine kinase (316 aa).

An ATP-binding site is contributed by 97 to 107 (PPARGLGSSAS).

It belongs to the GHMP kinase family. Homoserine kinase subfamily.

It is found in the cytoplasm. The enzyme catalyses L-homoserine + ATP = O-phospho-L-homoserine + ADP + H(+). It participates in amino-acid biosynthesis; L-threonine biosynthesis; L-threonine from L-aspartate: step 4/5. In terms of biological role, catalyzes the ATP-dependent phosphorylation of L-homoserine to L-homoserine phosphate. This Prochlorococcus marinus (strain MIT 9303) protein is Homoserine kinase.